Reading from the N-terminus, the 143-residue chain is Turripeptide VIII-01 (143 aa).

The N-terminal stretch at 1 to 23 is a signal peptide; that stretch reads MALSLDILMSVTMVTAVLTTVNA. Positions 24 to 32 are excised as a propeptide; it reads EYKDSRLDS.

In terms of processing, contains 4 disulfide bonds. As to expression, expressed by the venom duct.

It is found in the secreted. This is Turripeptide VIII-01 from Gemmula speciosa (Splendid gem-turris).